Consider the following 143-residue polypeptide: Papain inhibitor (143 aa).

The N-terminal stretch at Met1 to Ala33 is a signal peptide.

Monomer.

It localises to the secreted. Stress protein produced under hyperthermal stress conditions. Serves as a glutamine and lysine donor substrate for transglutaminase. Inhibits the cysteine proteases papain and bromelain as well as the bovine serine protease trypsin. Has hardly any or no effect on subtilisin, bovine chymotrypsin, proteinase K from T.album, transglutaminase-activating metalloproteinase (TAMEP) from S.mobaraensis, dispase from B.polymyxa, thermolysin from B.thermoproteolyticus or collagenase from C.histolyticum. This chain is Papain inhibitor (pi), found in Streptomyces mobaraensis (Streptoverticillium mobaraense).